Consider the following 185-residue polypeptide: Comitin (185 aa).

The Bulb-type lectin domain occupies 1–123 (MELLRQGEHL…YKQILYSSKP (123 aa)). The segment at 138–185 (SGHPQSAYPPQQPGYGYPAQPGYPPQPGYPPQHGYPPQHGYPQQPGYY) is disordered. Over residues 141 to 157 (PQSAYPPQQPGYGYPAQ) the composition is skewed to low complexity. Repeat copies occupy residues 153–158 (GYPAQP), 159–164 (GYPPQP), 165–170 (GYPPQH), 171–176 (GYPPQH), and 177–182 (GYPQQP). Residues 153–182 (GYPAQPGYPPQPGYPPQHGYPPQHGYPQQP) form a 5 X 6 AA tandem repeats of G-Y-P-X-Q-[PH] region. Positions 158 to 171 (PGYPPQPGYPPQHG) are enriched in pro residues. Residues 172–185 (YPPQHGYPQQPGYY) show a composition bias toward low complexity.

As to quaternary structure, homodimer in solution. The N-terminus is blocked.

The protein resides in the golgi apparatus membrane. It is found in the endomembrane system. The protein localises to the cytoplasm. It localises to the cytoskeleton. Functionally, may have a role in cell motility. It has high affinity for both G-actin and F-actin. Binds to vesicle membranes via mannose residues and, by way of its interaction with actin, links these membranes to the cytoskeleton. The chain is Comitin (comA) from Dictyostelium discoideum (Social amoeba).